The primary structure comprises 919 residues: Motility hub protein FimV (919 aa).

The first 24 residues, 1-24 (MVRLRTLVRAIAAASVLTSGMAHG), serve as a signal peptide directing secretion. Positions 140–171 (ASAPQAPVSAPRATGAPRAPQAPAPVRTTAPA) are enriched in low complexity. Disordered stretches follow at residues 140-177 (ASAP…DTYR) and 237-312 (ERSP…KGDS). A LysM domain is found at 174–229 (DTYRTVSNDTLWEIAQRNRTDRVSVPQAMLAFQELNPGAFVDGNINRLKSGQVLRI). A compositionally biased stretch (polar residues) spans 245 to 256 (SQVQAQNQSWRG). The span at 299–312 (KASKGADKGGKGDS) shows a compositional bias: basic and acidic residues. A coiled-coil region spans residues 319–367 (LAVTKESLDSTRRENEELQSRMQDLQSQLDKLQKLIQLKDAQLAKLQGQ). Residues 372–445 (GQGAAQPNAA…APAVPAPAPV (74 aa)) form a disordered region. The span at 390-417 (AAAQAPAQPGTPAAAAPTPAPAGEAPAA) shows a compositional bias: low complexity. Over residues 418–443 (PAQPPVAPPPAPAAEKPPAPAVPAPA) the composition is skewed to pro residues. Residues 464-484 (LWLAVIGGSALLALLVLLMIL) traverse the membrane as a helical segment. A disordered region spans residues 785 to 816 (AEEPALSLPDDFDLSLADEPTEPAAPEKGEDS).

In terms of assembly, interacts with FimL. Interacts with DgcP.

The protein resides in the cell inner membrane. Its function is as follows. Inner membrane hub protein that plays both cAMP-dependent and cAMP-independent roles in twitching motility. Regulates intracellular cyclic AMP (cAMP) levels through the activation of adenylate cyclase CyaB. Plays an essential role in a number of virulence mechanisms including type IV pilus (T4P)-mediated assembly and twitching motility as well as cAMP-dependent virulence gene expression. Also mediates type II secretion (T2S) of lipases and proteases. In addition, mediates the cAMP-independent localization of multiple T4P structural and regulatory components to the cell poles. This role in directing proteins to the cell pole is not restricted to type IV component and involves other proteins such as the diguanylate cyclase DgcP. The sequence is that of Motility hub protein FimV (fimV) from Pseudomonas aeruginosa (strain ATCC 15692 / DSM 22644 / CIP 104116 / JCM 14847 / LMG 12228 / 1C / PRS 101 / PAO1).